We begin with the raw amino-acid sequence, 124 residues long: Small ribosomal subunit protein uS13 (124 aa).

The segment covering 92–117 (RRGLPVRGQRTKSNARTRKGPRKTVA) has biased composition (basic residues). The disordered stretch occupies residues 92–124 (RRGLPVRGQRTKSNARTRKGPRKTVANKKIESK).

The protein belongs to the universal ribosomal protein uS13 family. As to quaternary structure, part of the 30S ribosomal subunit. Forms a loose heterodimer with protein S19. Forms two bridges to the 50S subunit in the 70S ribosome.

Its function is as follows. Located at the top of the head of the 30S subunit, it contacts several helices of the 16S rRNA. In the 70S ribosome it contacts the 23S rRNA (bridge B1a) and protein L5 of the 50S subunit (bridge B1b), connecting the 2 subunits; these bridges are implicated in subunit movement. Contacts the tRNAs in the A and P-sites. The chain is Small ribosomal subunit protein uS13 from Mycoplasmoides gallisepticum (strain R(low / passage 15 / clone 2)) (Mycoplasma gallisepticum).